The chain runs to 376 residues: Lipid-A-disaccharide synthase (376 aa).

It belongs to the LpxB family.

It catalyses the reaction a lipid X + a UDP-2-N,3-O-bis[(3R)-3-hydroxyacyl]-alpha-D-glucosamine = a lipid A disaccharide + UDP + H(+). It participates in bacterial outer membrane biogenesis; LPS lipid A biosynthesis. Condensation of UDP-2,3-diacylglucosamine and 2,3-diacylglucosamine-1-phosphate to form lipid A disaccharide, a precursor of lipid A, a phosphorylated glycolipid that anchors the lipopolysaccharide to the outer membrane of the cell. The chain is Lipid-A-disaccharide synthase from Coxiella burnetii (strain RSA 331 / Henzerling II).